We begin with the raw amino-acid sequence, 337 residues long: Transcription initiation factor IIB (337 aa).

The TFIIB-type zinc-finger motif lies at 36–68 (SVQSVCPECGSRQLVHDYERAELVCQNCGLVLD). 4 residues coordinate Zn(2+): C41, C44, C60, and C63. Tandem repeats lie at residues 154-237 (SELD…SREL) and 248-329 (DYVP…ELAE).

It belongs to the TFIIB family.

Stabilizes TBP binding to an archaeal box-A promoter. Also responsible for recruiting RNA polymerase II to the pre-initiation complex (DNA-TBP-TFIIB). The chain is Transcription initiation factor IIB from Methanoculleus marisnigri (strain ATCC 35101 / DSM 1498 / JR1).